The following is an 808-amino-acid chain: Genome polyprotein (808 aa).

Residues 34-55 are disordered; that stretch reads TAEVGSHQPEPLKTSVDKPGSK. Short sequence motifs ((L)YPX(n)L motif) lie at residues 146-150 and 179-184; these read YPHGL and YPVWEL.

It belongs to the picornaviridae polyprotein family. Homopentamer. Homooligomer. In terms of assembly, interacts with capsid protein VP2. Interacts with capsid protein VP3. As to quaternary structure, interacts with capsid protein VP1. Interacts with capsid protein VP3. Interacts with capsid protein VP1. Interacts with capsid protein VP2. Specific enzymatic cleavages by viral protease in vivo yield a variety of precursors and mature proteins. Polyprotein processing intermediates are produced, such as P1-2A which is a functional precursor of the structural proteins, VP0 which is a VP4-VP2 precursor, VP1-2A precursor, 3ABC precursor which is a stable and catalytically active precursor of 3A, 3B and 3C proteins, 3AB and 3CD precursors. The assembly signal 2A is removed from VP1-2A by a host protease, possibly host Cathepsin L. This cleavage occurs over a region of 3 amino-acids probably generating VP1 proteins with heterogeneous C-termini. In terms of processing, during virion maturation, immature virions are rendered infectious following cleavage of VP0 into VP4 and VP2. This maturation seems to be an autocatalytic event triggered by the presence of RNA in the capsid and is followed by a conformational change of the particle. Post-translationally, the assembly signal 2A is removed from VP1-2A by a host protease, possibly host Cathepsin L in naked virions. This cleavage does not occur in enveloped virions. This cleavage occurs over a region of 3 amino-acids probably generating VP1 proteins with heterogeneous C-termini. Unlike other picornaviruses, does not seem to be myristoylated.

It localises to the virion. Its subcellular location is the host endosome. It is found in the host multivesicular body. Its function is as follows. Capsid proteins VP1, VP2, and VP3 form a closed capsid enclosing the viral positive strand RNA genome. All these proteins contain a beta-sheet structure called beta-barrel jelly roll. Together they form an icosahedral capsid (T=3) composed of 60 copies of each VP1, VP2, and VP3, with a diameter of approximately 300 Angstroms. VP1 is situated at the 12 fivefold axes, whereas VP2 and VP3 are located at the quasi-sixfold axes. The naked capsid interacts with the host receptor HAVCR1 to provide virion attachment to and probably entry into the target cell. In terms of biological role, VP0 precursor is a component of the immature procapsids. Functionally, plays a role in the assembly of the 12 pentamers into an icosahedral structure. Has not been detected in mature virions, supposedly owing to its small size. Precursor component of immature procapsids that corresponds to an extended form of the structural protein VP1. After maturation, possibly by the host Cathepsin L, the assembly signal 2A is cleaved to give rise to the mature VP1 protein. The sequence is that of Genome polyprotein from Human hepatitis A virus genotype IIIA (isolate GA76) (HHAV).